The chain runs to 172 residues: Adenine phosphoribosyltransferase (172 aa).

It belongs to the purine/pyrimidine phosphoribosyltransferase family. Homodimer.

Its subcellular location is the cytoplasm. It catalyses the reaction AMP + diphosphate = 5-phospho-alpha-D-ribose 1-diphosphate + adenine. The protein operates within purine metabolism; AMP biosynthesis via salvage pathway; AMP from adenine: step 1/1. Its function is as follows. Catalyzes a salvage reaction resulting in the formation of AMP, that is energically less costly than de novo synthesis. The protein is Adenine phosphoribosyltransferase of Pediococcus pentosaceus (strain ATCC 25745 / CCUG 21536 / LMG 10740 / 183-1w).